A 223-amino-acid chain; its full sequence is uncharacterized protein (223 aa).

Residues T117–T148 are disordered.

This is an uncharacterized protein from Homo sapiens (Human).